A 101-amino-acid chain; its full sequence is Small ribosomal subunit protein uS14 (101 aa).

It belongs to the universal ribosomal protein uS14 family. Part of the 30S ribosomal subunit. Contacts proteins S3 and S10.

Its function is as follows. Binds 16S rRNA, required for the assembly of 30S particles and may also be responsible for determining the conformation of the 16S rRNA at the A site. This is Small ribosomal subunit protein uS14 from Ruthia magnifica subsp. Calyptogena magnifica.